The primary structure comprises 194 residues: Large ribosomal subunit protein eL15 (194 aa).

The disordered stretch occupies residues 158–194 (ANRGLTSAGKKGRGLMYKGKGAEKARPGVRANGKKTK).

It belongs to the eukaryotic ribosomal protein eL15 family.

The sequence is that of Large ribosomal subunit protein eL15 from Methanococcus maripaludis (strain DSM 14266 / JCM 13030 / NBRC 101832 / S2 / LL).